The primary structure comprises 305 residues: Tyrosine recombinase XerC (305 aa).

The Core-binding (CB) domain maps to 4-95; sequence TSIQELIDKW…AVKNFYRFLE (92 aa). Residues 116-298 enclose the Tyr recombinase domain; the sequence is LLPKALSEDD…SIKHLEAVYT (183 aa). Active-site residues include arginine 159, lysine 182, histidine 250, arginine 253, and histidine 276. The O-(3'-phospho-DNA)-tyrosine intermediate role is filled by tyrosine 285.

It belongs to the 'phage' integrase family. XerC subfamily. Forms a cyclic heterotetrameric complex composed of two molecules of XerC and two molecules of XerD.

Its subcellular location is the cytoplasm. In terms of biological role, site-specific tyrosine recombinase, which acts by catalyzing the cutting and rejoining of the recombining DNA molecules. The XerC-XerD complex is essential to convert dimers of the bacterial chromosome into monomers to permit their segregation at cell division. It also contributes to the segregational stability of plasmids. The sequence is that of Tyrosine recombinase XerC from Rickettsia felis (strain ATCC VR-1525 / URRWXCal2) (Rickettsia azadi).